A 119-amino-acid polypeptide reads, in one-letter code: Secreted RxLR effector protein RXLR-C04 (119 aa).

A signal peptide spans 1 to 22 (MRLSYIFVVVATIITNCDIASA). Residues 40–77 (RILRQTNDSDDLEPIRHAMLDMELLEKIAKDPKYAEEV) carry the RxLR-dEER motif. The N-linked (GlcNAc...) asparagine glycan is linked to Asn46.

Belongs to the RxLR effector family.

It localises to the secreted. Its subcellular location is the host cytoplasm. The protein localises to the host nucleus. Functionally, secreted effector that suppresses pattern-triggered immunity (PTI) in plant host. This chain is Secreted RxLR effector protein RXLR-C04, found in Plasmopara halstedii (Downy mildew of sunflower).